A 591-amino-acid polypeptide reads, in one-letter code: Aspartate--tRNA ligase (591 aa).

Glu173 is a binding site for L-aspartate. Residues 197–200 (QLFK) form an aspartate region. Arg219 lines the L-aspartate pocket. ATP-binding positions include 219–221 (RDE) and Gln228. L-aspartate is bound at residue His448. Glu482 lines the ATP pocket. Arg489 contributes to the L-aspartate binding site. 534-537 (GLDR) serves as a coordination point for ATP.

It belongs to the class-II aminoacyl-tRNA synthetase family. Type 1 subfamily. Homodimer.

It localises to the cytoplasm. It catalyses the reaction tRNA(Asp) + L-aspartate + ATP = L-aspartyl-tRNA(Asp) + AMP + diphosphate. Functionally, catalyzes the attachment of L-aspartate to tRNA(Asp) in a two-step reaction: L-aspartate is first activated by ATP to form Asp-AMP and then transferred to the acceptor end of tRNA(Asp). The chain is Aspartate--tRNA ligase from Shewanella sp. (strain MR-7).